The following is a 416-amino-acid chain: Formyl-CoA:oxalate CoA-transferase (416 aa).

Residues 17–18 (QS), arginine 38, 72–75 (LNTK), 96–98 (NFH), histidine 104, and 137–140 (KAYE) each bind CoA. Residue aspartate 169 is the Nucleophile of the active site. 248-250 (GGQ) is a substrate binding site. 273–275 (QEQ) is a CoA binding site.

Belongs to the CoA-transferase III family. Frc subfamily. In terms of assembly, homodimer.

The catalysed reaction is formyl-CoA + oxalate = oxalyl-CoA + formate. It functions in the pathway metabolic intermediate degradation; oxalate degradation; CO(2) and formate from oxalate: step 1/2. Involved in the catabolism of oxalate and in the adapatation to low pH via the induction of the oxalate-dependent acid tolerance response (ATR). Catalyzes the transfer of the CoA moiety from formyl-CoA to oxalate. The chain is Formyl-CoA:oxalate CoA-transferase from Escherichia coli O6:H1 (strain CFT073 / ATCC 700928 / UPEC).